Consider the following 467-residue polypeptide: MAHVEVLARLQKETKCPICLDDLTDPVTVECGHNFCRSCIKDFWAGQQATSSCPVCRHQCQHRNLRSNAQLGNMIETAQLLQGMENKRHESSTSCERHNQALTLFCEDDLQLLCDQCVEPESHGRHQVLSITEAASLHRKHLQDYSKLLKWEVKEIQGLMSALNKRTVTLREQAEAQRSQLTSECEKLMRFLDQEERAAFSRLEDEEMRLEKRLLDNIAALEHHGSSLRDLLRHLMLTGELSEAKMLSTVKDFYLNCRRQLISPSIFPVQLRRVEYSFPLQYSALQKVIQHFTDNVTLDLKTAHPNLLISKDRTCVTFTKKRQRIPGSSSFTKSPVVLGIPHFNSGRHFWEVQVGKKPKWAIGICKADSSIGERQSPNPWGYWRIVWQGDSFNVSGADPDSRLKAARATSIGVFLDYELGEVSFYGMPEKCHLYTFRDTFSGPVCPYFYIGPQSEPLRLCSATDSEC.

Residues 16–57 (CPICLDDLTDPVTVECGHNFCRSCIKDFWAGQQATSSCPVCR) form an RING-type zinc finger. The B box-type zinc finger occupies 90 to 131 (ESSTSCERHNQALTLFCEDDLQLLCDQCVEPESHGRHQVLSI). Zn(2+)-binding residues include Cys-95, His-98, Cys-117, and His-123. Positions 168 to 222 (VTLREQAEAQRSQLTSECEKLMRFLDQEERAAFSRLEDEEMRLEKRLLDNIAALE) form a coiled coil. Positions 276–466 (YSFPLQYSAL…LRLCSATDSE (191 aa)) constitute a B30.2/SPRY domain.

Belongs to the TRIM/RBCC family.

It localises to the cytoplasm. The protein localises to the cytoskeleton. It is found in the spindle. In terms of biological role, may play a role in female meiosis. This chain is Tripartite motif-containing protein 75, found in Mus musculus (Mouse).